The primary structure comprises 401 residues: Methyltransferase cfoC (401 aa).

Asp-268 is a binding site for S-adenosyl-L-methionine. His-308 acts as the Proton acceptor in catalysis.

It belongs to the class I-like SAM-binding methyltransferase superfamily. Cation-independent O-methyltransferase family.

It participates in secondary metabolite biosynthesis; flavonoid biosynthesis. Its function is as follows. Methyltransferase; part of the gene cluster that mediates the biosynthesis of chlorflavonin, a fungal flavonoid with acetolactate synthase inhibitory activity. Within the pathway, cfoC is responsible for the methylation at position C8-OH of flavonoid. The pathway begins with the PKS-NRPS hybrid synthetase cfoA that uses benzoic acid or p-hydroxybenzoic acid as a starter unit with four rounds of chain elongation using malonyl-CoA to form the chalcone skeleton. Then, a new type of chalcone isomerase, cfoK, catalyzes the conversion of the chalcone into a flavanone by a histidine-mediated oxa-Michael addition mechanism. The desaturation of flavanone to flavone is catalyzed by a new type of flavone synthase, the flavin mononucleotide (FMN)-dependent oxidoreductase cfoJ. Monooxygenases cfoF, cfoG, and P450 cfoH are responsible for the hydroxylation of the flavonoid skeleton at sites C3, C8, and C2', respectively. Like cfoF, the dehydratase cfoI also plays a role in the hydroxylation of position C3. Methyltransferases cfoB, cfoC, and cfoD then catalyze the methylation of C7-OH, C8-OH, and C3-OH, respectively. Finally, the monooxygenase cfoE is responsible for the chlorination of flavonoid at position C3'. The chain is Methyltransferase cfoC from Aspergillus candidus.